A 72-amino-acid chain; its full sequence is Large ribosomal subunit protein bL28 (72 aa).

It belongs to the bacterial ribosomal protein bL28 family.

The protein is Large ribosomal subunit protein bL28 of Chlorobium phaeobacteroides (strain BS1).